Consider the following 175-residue polypeptide: MSRRGVTVWFTGLSGAGKTTLSCGVAQQLRAWGLPVEVLDGDLVRQHLTKGLGFSKVDREENIRRIGFVAEMLTRHGVIVLVSAISPYRAARQEVRRYIGSFIEVFVDAPLEVCERRDVKGLYRKARAGLIQHFTGIDDPYEPPEQPEVVCKTAEQSIPECIDLVIQSLKSRGYV.

An ATP-binding site is contributed by 12-19; it reads GLSGAGKT. Ser-86 serves as the catalytic Phosphoserine intermediate.

Belongs to the APS kinase family.

It carries out the reaction adenosine 5'-phosphosulfate + ATP = 3'-phosphoadenylyl sulfate + ADP + H(+). Its pathway is sulfur metabolism; hydrogen sulfide biosynthesis; sulfite from sulfate: step 2/3. In terms of biological role, catalyzes the synthesis of activated sulfate. The chain is Adenylyl-sulfate kinase from Synechococcus sp. (strain JA-2-3B'a(2-13)) (Cyanobacteria bacterium Yellowstone B-Prime).